Reading from the N-terminus, the 441-residue chain is Ribosomal protein uS12 methylthiotransferase RimO (441 aa).

The 112-residue stretch at Pro-5–Lys-116 folds into the MTTase N-terminal domain. The [4Fe-4S] cluster site is built by Cys-14, Cys-50, Cys-79, Cys-154, Cys-158, and Cys-161. The 231-residue stretch at Thr-140–Gln-370 folds into the Radical SAM core domain. One can recognise a TRAM domain in the interval Gln-372–Ser-438.

It belongs to the methylthiotransferase family. RimO subfamily. [4Fe-4S] cluster serves as cofactor.

It is found in the cytoplasm. The catalysed reaction is L-aspartate(89)-[ribosomal protein uS12]-hydrogen + (sulfur carrier)-SH + AH2 + 2 S-adenosyl-L-methionine = 3-methylsulfanyl-L-aspartate(89)-[ribosomal protein uS12]-hydrogen + (sulfur carrier)-H + 5'-deoxyadenosine + L-methionine + A + S-adenosyl-L-homocysteine + 2 H(+). In terms of biological role, catalyzes the methylthiolation of an aspartic acid residue of ribosomal protein uS12. This is Ribosomal protein uS12 methylthiotransferase RimO from Trichodesmium erythraeum (strain IMS101).